The following is a 590-amino-acid chain: Probable serine/threonine-protein phosphatase PP2A regulatory subunit (590 aa).

HEAT repeat units lie at residues 37–73 (LSTI…VLAE), 74–111 (QLGN…DKAV), 113–150 (SLRK…TSAC), 151–188 (GLFS…RAAA), 189–227 (AKLG…LLTV), 228–266 (ESAI…YMVA), 267–305 (EKLI…CAAT), 306–344 (QRLQ…QLVK), 349–387 (GVIM…LNII), 388–426 (SSLD…LAIV), 427–465 (QFMP…EAST), 466–504 (LIMK…MTCL), 505–543 (FCLN…FNAA), and 544–582 (KSLK…YFSE).

The protein belongs to the phosphatase 2A regulatory subunit A family. As to quaternary structure, part of a complex consisting of a common heterodimeric core enzyme, composed of catalytic subunit let-92 and constant regulatory subunit paa-1, that associates with a variety of regulatory subunits which confer distinct properties to the holoenzyme. Interacts with rsa-1.

It localises to the cytoplasm. It is found in the cytoskeleton. The protein resides in the microtubule organizing center. The protein localises to the centrosome. Its subcellular location is the spindle. Acts as a scaffolding protein for phosphatase let-92 and its regulatory subunits. Probably together with let-92 and regulatory subunit sur-6, regulates centriole duplication, microtubule outgrowth and mitotic spindle stability during early embryonic cell division by preventing the degradation of sas-5 and kinase zyg-1. During vulva development, may play a role with phosphatase let-92 and regulatory subunit sur-6 in the induction of vulva cell precursors by positively regulating let-60/Ras-MAP kinase signaling, probably by promoting lin-45 activation. Plays a positive role in axon guidance probably by inhibiting phosphatase let-92. In Caenorhabditis elegans, this protein is Probable serine/threonine-protein phosphatase PP2A regulatory subunit (paa-1).